The primary structure comprises 480 residues: Thiamine biosynthesis bifunctional protein ThiM/ThiE (480 aa).

The segment at 1–287 (MSTLPERVRE…LYVLVSGATP (287 aa)) is hydroxyethylthiazole kinase. Met40 contributes to the 5-(2-hydroxyethyl)-4-methylthiazole binding site. Positions 116 and 164 each coordinate ATP. Gly191 is a 5-(2-hydroxyethyl)-4-methylthiazole binding site. The segment at 288 to 480 (PDVLEAVLQA…VRRAKGEVSA (193 aa)) is thiamine-phosphate synthase. Residues 303–307 (QFREK) and Asn335 contribute to the 4-amino-2-methyl-5-(diphosphooxymethyl)pyrimidine site. Positions 336 and 355 each coordinate Mg(2+). Thr374 provides a ligand contact to 4-amino-2-methyl-5-(diphosphooxymethyl)pyrimidine. 400–402 (TPS) provides a ligand contact to 2-[(2R,5Z)-2-carboxy-4-methylthiazol-5(2H)-ylidene]ethyl phosphate. Lys403 provides a ligand contact to 4-amino-2-methyl-5-(diphosphooxymethyl)pyrimidine. Residues Gly431 and 451–452 (IS) each bind 2-[(2R,5Z)-2-carboxy-4-methylthiazol-5(2H)-ylidene]ethyl phosphate.

In the N-terminal section; belongs to the Thz kinase family. The protein in the C-terminal section; belongs to the thiamine-phosphate synthase family. Requires Mg(2+) as cofactor.

It catalyses the reaction 5-(2-hydroxyethyl)-4-methylthiazole + ATP = 4-methyl-5-(2-phosphooxyethyl)-thiazole + ADP + H(+). The enzyme catalyses 2-[(2R,5Z)-2-carboxy-4-methylthiazol-5(2H)-ylidene]ethyl phosphate + 4-amino-2-methyl-5-(diphosphooxymethyl)pyrimidine + 2 H(+) = thiamine phosphate + CO2 + diphosphate. The catalysed reaction is 2-(2-carboxy-4-methylthiazol-5-yl)ethyl phosphate + 4-amino-2-methyl-5-(diphosphooxymethyl)pyrimidine + 2 H(+) = thiamine phosphate + CO2 + diphosphate. It carries out the reaction 4-methyl-5-(2-phosphooxyethyl)-thiazole + 4-amino-2-methyl-5-(diphosphooxymethyl)pyrimidine + H(+) = thiamine phosphate + diphosphate. It participates in cofactor biosynthesis; thiamine diphosphate biosynthesis; 4-methyl-5-(2-phosphoethyl)-thiazole from 5-(2-hydroxyethyl)-4-methylthiazole: step 1/1. The protein operates within cofactor biosynthesis; thiamine diphosphate biosynthesis; thiamine phosphate from 4-amino-2-methyl-5-diphosphomethylpyrimidine and 4-methyl-5-(2-phosphoethyl)-thiazole: step 1/1. In terms of biological role, condenses 4-methyl-5-(beta-hydroxyethyl)thiazole monophosphate (THZ-P) and 2-methyl-4-amino-5-hydroxymethyl pyrimidine pyrophosphate (HMP-PP) to form thiamine monophosphate (TMP). This Symbiobacterium thermophilum (strain DSM 24528 / JCM 14929 / IAM 14863 / T) protein is Thiamine biosynthesis bifunctional protein ThiM/ThiE (thiM/thiE).